Reading from the N-terminus, the 300-residue chain is MRCLALDIGGTKIAAAIVKNGEIEQRQQIHTPRENVVEGMHQALGKLLADYEGQFDYVAVASTGIINNGILSALNPKNLGGLAEFPLKASIAKHTDKPIGLLNDAQAATYAEYQLQNSEQVSNFVFITVSTGVGGGIVLNQILQTGSRGIAGHIGHTLADPNGAICGCGRRGCVEAIASGRAIEAVSSQWEEPCDPKEVFERFRKNDEKATALVERSAKAIANLIADLVISLDIQKIAIGGSVGLAEGYLPLVEKYLQDFPSIYCCEIESAKFGQDAGLIGAAYWVKDVLLDKPEGTIYG.

ATP is bound by residues 5-12 (ALDIGGTK) and 132-139 (GVGGGIVL). Zn(2+) is bound by residues H156, C166, C168, and C173.

It belongs to the ROK (NagC/XylR) family. NanK subfamily. Homodimer.

It catalyses the reaction an N-acyl-D-mannosamine + ATP = an N-acyl-D-mannosamine 6-phosphate + ADP + H(+). It participates in amino-sugar metabolism; N-acetylneuraminate degradation; D-fructose 6-phosphate from N-acetylneuraminate: step 2/5. Functionally, catalyzes the phosphorylation of N-acetylmannosamine (ManNAc) to ManNAc-6-P. This chain is N-acetylmannosamine kinase, found in Haemophilus influenzae (strain PittGG).